A 92-amino-acid polypeptide reads, in one-letter code: C-C motif chemokine 3 (92 aa).

A signal peptide spans 1–23 (MKVSTAALAVLLCTMALWNEVFS). 2 cysteine pairs are disulfide-bonded: C34/C57 and C35/C73.

It belongs to the intercrine beta (chemokine CC) family. As to quaternary structure, self-associates. Also heterodimer of MIP-1-alpha(4-69) and MIP-1-beta(3-69). Interacts with CCR1.

Its subcellular location is the secreted. Its function is as follows. Monokine with inflammatory and chemokinetic properties. Binds to CCR1, CCR4 and CCR5. One of the major HIV-suppressive factors produced by CD8+ T-cells. Recombinant MIP-1-alpha induces a dose-dependent inhibition of different strains of HIV-1, HIV-2, and simian immunodeficiency virus (SIV). The sequence is that of C-C motif chemokine 3 (Ccl3) from Rattus norvegicus (Rat).